Reading from the N-terminus, the 56-residue chain is Conotoxin Cal6.41a (56 aa).

Residues 1 to 23 (MSGSGAMLLGLLILVAMATSLDT) form the signal peptide. Intrachain disulfides connect C27/C41, C33/C50, and C40/C54.

As to expression, expressed by the venom duct.

It localises to the secreted. Functionally, probable neurotoxin. In Californiconus californicus (California cone), this protein is Conotoxin Cal6.41a.